The sequence spans 207 residues: CASP-like protein 1D1 (207 aa).

Over 1 to 40 (MATVDGTTAPSSGGKTATVALESGGGRYGGPAPAKCSGAN) the chain is Cytoplasmic. A helical transmembrane segment spans residues 41–61 (LALRALLFAVSLSALVVLVTA). Residues 62 to 89 (KQTVMVPFVIRPPQFILAPVPAKYTHSP) lie on the Extracellular side of the membrane. A helical membrane pass occupies residues 90 to 110 (ALIYLLAALCATCFYSLITAI). Residues 111 to 124 (SSVRLLSSSACSAK) lie on the Cytoplasmic side of the membrane. The chain crosses the membrane as a helical span at residues 125–145 (TLFYLILLDVFYAAVMASATG). Residues 146-176 (TAGAVAWVGLKGNSHTRWNKICNVYGKFCRH) are Extracellular-facing. The chain crosses the membrane as a helical span at residues 177–197 (IGSSTFLALIAAIVLVLLAFL). Over 198–207 (NAYSLYRRSR) the chain is Cytoplasmic.

This sequence belongs to the Casparian strip membrane proteins (CASP) family. In terms of assembly, homodimer and heterodimers.

The protein localises to the cell membrane. This Oryza sativa subsp. japonica (Rice) protein is CASP-like protein 1D1.